Reading from the N-terminus, the 325-residue chain is ATP synthase subunit gamma, mitochondrial (325 aa).

A mitochondrion-targeting transit peptide spans 1-42 (MAMAVFRREGRRLLPSIAARPIAAIRSPLSSDQEEGLLGVRS).

Belongs to the ATPase gamma chain family. As to quaternary structure, F-type ATPases have 2 components, CF(1) - the catalytic core - and CF(0) - the membrane proton channel. CF(1) has five subunits: alpha(3), beta(3), gamma(1), delta(1), epsilon(1). CF(0) has three main subunits: a, b and c.

The protein resides in the mitochondrion. It localises to the mitochondrion inner membrane. In terms of biological role, mitochondrial membrane ATP synthase (F(1)F(0) ATP synthase or Complex V) produces ATP from ADP in the presence of a proton gradient across the membrane which is generated by electron transport complexes of the respiratory chain. F-type ATPases consist of two structural domains, F(1) - containing the extramembraneous catalytic core, and F(0) - containing the membrane proton channel, linked together by a central stalk and a peripheral stalk. During catalysis, ATP synthesis in the catalytic domain of F(1) is coupled via a rotary mechanism of the central stalk subunits to proton translocation. Part of the complex F(1) domain and the central stalk which is part of the complex rotary element. The gamma subunit protrudes into the catalytic domain formed of alpha(3)beta(3). Rotation of the central stalk against the surrounding alpha(3)beta(3) subunits leads to hydrolysis of ATP in three separate catalytic sites on the beta subunits. This Arabidopsis thaliana (Mouse-ear cress) protein is ATP synthase subunit gamma, mitochondrial (ATPC).